We begin with the raw amino-acid sequence, 200 residues long: Phospholipase A2 inhibitor LNF1 (200 aa).

The N-terminal stretch at 1 to 19 (MKYLHTICLLFIFVARGNS) is a signal peptide. 8 disulfide bridges follow: Cys22–Cys46, Cys25–Cys32, Cys39–Cys67, Cys73–Cys94, Cys95–Cys100, Cys118–Cys143, Cys136–Cys165, and Cys169–Cys191. N-linked (GlcNAc...) asparagine glycosylation occurs at Asn176.

It belongs to the CNF-like-inhibitor family. As to quaternary structure, occurs as a mixture of oligomers. Tetrameric arrangement appears to be the predominant quaternary structure. In terms of tissue distribution, expressed by the liver.

The protein resides in the secreted. Inhibits the enzymatic activity of phospholipase A2 (PA2). This chain is Phospholipase A2 inhibitor LNF1, found in Lachesis muta muta (Bushmaster).